Here is a 505-residue protein sequence, read N- to C-terminus: Maturase K (505 aa).

Belongs to the intron maturase 2 family. MatK subfamily.

It is found in the plastid. It localises to the chloroplast. Usually encoded in the trnK tRNA gene intron. Probably assists in splicing its own and other chloroplast group II introns. The protein is Maturase K of Apocynum androsaemifolium (Spreading dogbane).